A 149-amino-acid polypeptide reads, in one-letter code: Transcriptional repressor NrdR (149 aa).

The segment at 3-34 (CPFCSATDTKVIDSRLVADGHQVRRRRECVQC) is a zinc-finger region. The ATP-cone domain maps to 49–139 (PRVVKQDGSR…VYRAFEDVSE (91 aa)).

This sequence belongs to the NrdR family. Requires Zn(2+) as cofactor.

In terms of biological role, negatively regulates transcription of bacterial ribonucleotide reductase nrd genes and operons by binding to NrdR-boxes. The sequence is that of Transcriptional repressor NrdR from Shewanella halifaxensis (strain HAW-EB4).